A 498-amino-acid chain; its full sequence is Polyphosphate:AMP phosphotransferase (498 aa).

PPK2 stretches follow at residues 11-234 (IDDD…MQAA) and 269-491 (LSKE…LEKA).

Belongs to the polyphosphate kinase 2 (PPK2) family. Class II subfamily.

The catalysed reaction is [phosphate](n) + ADP = [phosphate](n+1) + AMP. In terms of biological role, uses inorganic polyphosphate (polyP) as a donor to convert AMP to ADP. Can also convert GMP to GDP, with lower efficiency. The chain is Polyphosphate:AMP phosphotransferase from Pseudomonas syringae pv. tomato (strain ATCC BAA-871 / DC3000).